A 430-amino-acid chain; its full sequence is MVFVSDSSISLPIWDAPRARGPIVSDLAIPGSKSITNRALILAALASTPSTIIDVLRSRDTDLMTDGLRSLGITITEEAVDRYRVEPGQLSAGSVECGLAGTVMRFLPPVAAFADGPVHFDGDPQARVRPMTSILDALRSLGVEVDNNNLPFTVNAGEVPEGGVVEIDASGSSQFVSGLLLSAPRFKNGVTVKHVGGRLPSMPHIEMTVDMLRSAGIEIEESENQWVVHPGEILGRTWRIEPDLSNATPFLAAAAVTGGTIKINHWPIKTTQPGDAIRSILERMGCEVELVAQGEGYDLSVTGPVALKGIEIDMSDIGELTPTVAALAALASTESRLTGIAHLRGHETDRLAALTAEINKLGGKCTELKDGLLIEPASLHGGVWHSYADHRMATAGAIIGLAVDGVQVEDIKTTSKTFPGFENVWEEMVG.

3-phosphoshikimate is bound by residues K33, S34, and R38. Residue K33 participates in phosphoenolpyruvate binding. Residues G101 and R129 each coordinate phosphoenolpyruvate. Residues S172, S173, Q174, S201, E319, and H346 each coordinate 3-phosphoshikimate. Q174 contacts phosphoenolpyruvate. E319 serves as the catalytic Proton acceptor. Residues R350, R391, and K416 each contribute to the phosphoenolpyruvate site.

The protein belongs to the EPSP synthase family. In terms of assembly, monomer.

The protein resides in the cytoplasm. It carries out the reaction 3-phosphoshikimate + phosphoenolpyruvate = 5-O-(1-carboxyvinyl)-3-phosphoshikimate + phosphate. It participates in metabolic intermediate biosynthesis; chorismate biosynthesis; chorismate from D-erythrose 4-phosphate and phosphoenolpyruvate: step 6/7. Functionally, catalyzes the transfer of the enolpyruvyl moiety of phosphoenolpyruvate (PEP) to the 5-hydroxyl of shikimate-3-phosphate (S3P) to produce enolpyruvyl shikimate-3-phosphate and inorganic phosphate. This chain is 3-phosphoshikimate 1-carboxyvinyltransferase, found in Corynebacterium glutamicum (strain ATCC 13032 / DSM 20300 / JCM 1318 / BCRC 11384 / CCUG 27702 / LMG 3730 / NBRC 12168 / NCIMB 10025 / NRRL B-2784 / 534).